Consider the following 251-residue polypeptide: Imidazole glycerol phosphate synthase subunit HisF (251 aa).

Catalysis depends on residues D11 and D130.

Belongs to the HisA/HisF family. In terms of assembly, heterodimer of HisH and HisF.

Its subcellular location is the cytoplasm. The enzyme catalyses 5-[(5-phospho-1-deoxy-D-ribulos-1-ylimino)methylamino]-1-(5-phospho-beta-D-ribosyl)imidazole-4-carboxamide + L-glutamine = D-erythro-1-(imidazol-4-yl)glycerol 3-phosphate + 5-amino-1-(5-phospho-beta-D-ribosyl)imidazole-4-carboxamide + L-glutamate + H(+). The protein operates within amino-acid biosynthesis; L-histidine biosynthesis; L-histidine from 5-phospho-alpha-D-ribose 1-diphosphate: step 5/9. Its function is as follows. IGPS catalyzes the conversion of PRFAR and glutamine to IGP, AICAR and glutamate. The HisF subunit catalyzes the cyclization activity that produces IGP and AICAR from PRFAR using the ammonia provided by the HisH subunit. This is Imidazole glycerol phosphate synthase subunit HisF from Metallosphaera sedula (strain ATCC 51363 / DSM 5348 / JCM 9185 / NBRC 15509 / TH2).